A 354-amino-acid chain; its full sequence is MSFYPILRGPAKQESPPPPPAPKKRRKTARACLHCQKAHLTCDEGRPCARCIKKNMGDQCVDGKRKQAKYLVGLPPTPPGQATQQKQQQQQQQQQAVQHGMGPPDTDFGSSAANLEYSILSNILGRGDTSSPPDFFPAQSPHMPSPMSIPGLHMEEEGSQTAGTPQGSPTDIYTSITKPYAYTTGFHALIAYLKSRFEKKELLDVVKSMAFYRPSFIATTQTLQYEDLVFMEKCFQRTLLEFEKYISLSGTPTVLWRRTGQIAAVGKEFCVLTMRSQADLLSQFIIECMDNKSVVQYFDVFSELAFEDSRGTITTTFGLTKPSGEVVNTACSLTIKRDVFDIPMMIVGNFLPIL.

Positions 1–29 are disordered; it reads MSFYPILRGPAKQESPPPPPAPKKRRKTA. A DNA-binding region (zn(2)-C6 fungal-type) is located at residues 32 to 60; it reads CLHCQKAHLTCDEGRPCARCIKKNMGDQC. 2 disordered regions span residues 71–111 and 128–169; these read LVGL…FGSS and DTSS…QGSP. Residues 81-98 show a composition bias toward low complexity; it reads QATQQKQQQQQQQQQAVQ. A compositionally biased stretch (polar residues) spans 159–169; that stretch reads SQTAGTPQGSP.

It belongs to the ERT1/acuK family.

It localises to the nucleus. In terms of biological role, transcription factor which regulates nonfermentable carbon utilization. Activator of gluconeogenetic genes. The sequence is that of Transcription activator of gluconeogenesis ERT1-1 (ERT1-1) from Yarrowia lipolytica (strain CLIB 122 / E 150) (Yeast).